The sequence spans 634 residues: Chaperone protein HtpG (634 aa).

The segment at Met1–Arg342 is a; substrate-binding. A b region spans residues Glu343–Gln559. Positions Ile560–Val634 are c.

The protein belongs to the heat shock protein 90 family. In terms of assembly, homodimer.

Its subcellular location is the cytoplasm. In terms of biological role, molecular chaperone. Has ATPase activity. In Pseudomonas fluorescens (strain ATCC BAA-477 / NRRL B-23932 / Pf-5), this protein is Chaperone protein HtpG.